The sequence spans 93 residues: Pyrimidine/purine nucleoside phosphorylase (93 aa).

It belongs to the nucleoside phosphorylase PpnP family.

The enzyme catalyses a purine D-ribonucleoside + phosphate = a purine nucleobase + alpha-D-ribose 1-phosphate. The catalysed reaction is adenosine + phosphate = alpha-D-ribose 1-phosphate + adenine. It catalyses the reaction cytidine + phosphate = cytosine + alpha-D-ribose 1-phosphate. It carries out the reaction guanosine + phosphate = alpha-D-ribose 1-phosphate + guanine. The enzyme catalyses inosine + phosphate = alpha-D-ribose 1-phosphate + hypoxanthine. The catalysed reaction is thymidine + phosphate = 2-deoxy-alpha-D-ribose 1-phosphate + thymine. It catalyses the reaction uridine + phosphate = alpha-D-ribose 1-phosphate + uracil. It carries out the reaction xanthosine + phosphate = alpha-D-ribose 1-phosphate + xanthine. In terms of biological role, catalyzes the phosphorolysis of diverse nucleosides, yielding D-ribose 1-phosphate and the respective free bases. Can use uridine, adenosine, guanosine, cytidine, thymidine, inosine and xanthosine as substrates. Also catalyzes the reverse reactions. The chain is Pyrimidine/purine nucleoside phosphorylase from Aliivibrio fischeri (strain ATCC 700601 / ES114) (Vibrio fischeri).